Here is a 92-residue protein sequence, read N- to C-terminus: MGRSLKKGPFCDEHLMKKIEKLNETGQKQVIKTWSRRSTIFPQFVGHTIAVYDGRRHVPVYITEDMVGHKLGEFAPTATFRGHAGDDKKTKR.

Belongs to the universal ribosomal protein uS19 family.

Protein S19 forms a complex with S13 that binds strongly to the 16S ribosomal RNA. In Geobacillus stearothermophilus (Bacillus stearothermophilus), this protein is Small ribosomal subunit protein uS19 (rpsS).